The chain runs to 117 residues: Nascent polypeptide-associated complex protein (117 aa).

One can recognise an NAC-A/B domain in the interval 9–77; that stretch reads PKQLKQMQRA…ARERSLEAEM (69 aa).

It belongs to the NAC-alpha family. As to quaternary structure, homodimer. Interacts with the ribosome. Binds ribosomal RNA.

Its function is as follows. Contacts the emerging nascent chain on the ribosome. This Methanothermobacter thermautotrophicus (strain ATCC 29096 / DSM 1053 / JCM 10044 / NBRC 100330 / Delta H) (Methanobacterium thermoautotrophicum) protein is Nascent polypeptide-associated complex protein.